The primary structure comprises 648 residues: MASTVALLRDSSDDRENFDDGETDCVQVGRKRKLTVFFYPLLLVFWLLRWVFYQFFLVLCFVCRGFVPRRHLATAETTTTMATAEEPDANLLIRQKQHHKKAFDFISKALKYDEENEDFKEMSIDLYRKGIEELQKGIAIDFSKGQGTTWERAHRLSDKMKVNLEMARDRLDFLESMVKIEHLGDHLPWHGGVAPAQRGQRRRAWQKAAPSAPSEPGTGPSWLKMAENGPAKGGPCPTSPRLQRSNTGVTLRRQQQQQLGGVSTVSRSQTLPRNSVPCPRMSARSPSRKAGNNEAVPTPNTARRRASQPQVPPVHPRGRQPTTRGGAAHRGGPPTVSQRSLLSSRVPPLKGVDSRLAHLILDEVVDGAPPVLFSDIAGQEVAKQALSEMVILPTDRPELFTGLRAPPKGLLLFGPPGNGKTMLAKAVAHESNSTFLNISAASLTSKYVGEGEKLVRALFAVARELQPSIIFIDEVDSLLSERKDNEHEATRRLKTEFLVEFDGLHTGSEERVLVMGATNRPQELDDAALRRFTKRVYVTLPDHNTRVILLEKLLKKHNNPLSADKLKYLARLTEGYSGSDLTALAKDAALGPIRELNPEQVRCVDPKKMRNISLQDFLDSLKKVRRSVTPQSLDFFDRWNREFGDITV.

Over 1-40 (MASTVALLRDSSDDRENFDDGETDCVQVGRKRKLTVFFYP) the chain is Cytoplasmic. The helical intramembrane region spans 41 to 61 (LLLVFWLLRWVFYQFFLVLCF). The Cytoplasmic portion of the chain corresponds to 62-648 (VCRGFVPRRH…WNREFGDITV (587 aa)). The 76-residue stretch at 99 to 174 (HKKAFDFISK…EMARDRLDFL (76 aa)) folds into the MIT domain. The interval 188-346 (PWHGGVAPAQ…SQRSLLSSRV (159 aa)) is disordered. Low complexity predominate over residues 247-266 (TGVTLRRQQQQQLGGVSTVS). Position 414-421 (414-421 (GPPGNGKT)) interacts with ATP.

It belongs to the AAA ATPase family. Spastin subfamily. In terms of assembly, homohexamer. The homohexamer is stabilized by ATP-binding. The homohexamer may adopt a ring conformation through which microtubules pass prior to being severed. Interacts with microtubules.

Its subcellular location is the membrane. The protein resides in the cytoplasm. It is found in the cytoskeleton. The protein localises to the microtubule organizing center. It localises to the centrosome. It carries out the reaction n ATP + n H2O + a microtubule = n ADP + n phosphate + (n+1) alpha/beta tubulin heterodimers.. Functionally, ATP-dependent microtubule severing protein. Microtubule severing may promote reorganization of cellular microtubule arrays and the release of microtubules from the microtubule organizing center following nucleation. The protein is Spastin (spas) of Ixodes scapularis (Black-legged tick).